The following is a 95-amino-acid chain: Co-chaperonin GroES (95 aa).

The protein belongs to the GroES chaperonin family. Heptamer of 7 subunits arranged in a ring. Interacts with the chaperonin GroEL.

It is found in the cytoplasm. Together with the chaperonin GroEL, plays an essential role in assisting protein folding. The GroEL-GroES system forms a nano-cage that allows encapsulation of the non-native substrate proteins and provides a physical environment optimized to promote and accelerate protein folding. GroES binds to the apical surface of the GroEL ring, thereby capping the opening of the GroEL channel. The protein is Co-chaperonin GroES of Desulfosudis oleivorans (strain DSM 6200 / JCM 39069 / Hxd3) (Desulfococcus oleovorans).